The chain runs to 22 residues: thr operon leader peptide (22 aa).

Residues 1 to 22 form a disordered region; it reads MRNISLTTTIITTTDTTGNGAG. The segment covering 7 to 22 has biased composition (low complexity); sequence TTTIITTTDTTGNGAG.

It belongs to the thr operon leader peptide family.

Its function is as follows. This protein is involved in control of the biosynthesis of threonine. The chain is thr operon leader peptide from Serratia marcescens.